We begin with the raw amino-acid sequence, 286 residues long: Sulfur carrier protein FdhD (286 aa).

Residue cysteine 110 is the Cysteine persulfide intermediate of the active site. 247-252 (FARGEK) provides a ligand contact to Mo-bis(molybdopterin guanine dinucleotide).

Belongs to the FdhD family.

Its subcellular location is the cytoplasm. In terms of biological role, required for formate dehydrogenase (FDH) activity. Acts as a sulfur carrier protein that transfers sulfur from IscS to the molybdenum cofactor prior to its insertion into FDH. The polypeptide is Sulfur carrier protein FdhD (Wolinella succinogenes (strain ATCC 29543 / DSM 1740 / CCUG 13145 / JCM 31913 / LMG 7466 / NCTC 11488 / FDC 602W) (Vibrio succinogenes)).